A 502-amino-acid chain; its full sequence is Mannitol 2-dehydrogenase (502 aa).

37 to 48 (IVHIGVGGFHRA) contacts NAD(+).

It belongs to the mannitol dehydrogenase family. Monomer.

The catalysed reaction is D-mannitol + NAD(+) = D-fructose + NADH + H(+). In terms of biological role, catalyzes the NAD(H)-dependent interconversion of D-fructose and D-mannitol in the mannitol metabolic pathway. The sequence is that of Mannitol 2-dehydrogenase from Neosartorya fischeri (strain ATCC 1020 / DSM 3700 / CBS 544.65 / FGSC A1164 / JCM 1740 / NRRL 181 / WB 181) (Aspergillus fischerianus).